Here is a 133-residue protein sequence, read N- to C-terminus: p53 and DNA damage-regulated protein 1 (133 aa).

Belongs to the prefoldin subunit beta family. Component of the PAQosome complex which is responsible for the biogenesis of several protein complexes and which consists of R2TP complex members RUVBL1, RUVBL2, RPAP3 and PIH1D1, URI complex members PFDN2, PFDN6, PDRG1, UXT and URI1 as well as ASDURF, POLR2E and DNAAF10/WDR92.

It is found in the cytoplasm. Its function is as follows. May play a role in chaperone-mediated protein folding. This Bos taurus (Bovine) protein is p53 and DNA damage-regulated protein 1 (PDRG1).